We begin with the raw amino-acid sequence, 424 residues long: Glutamyl-tRNA reductase (424 aa).

Substrate is bound by residues T49–R52, S105, E110–Q112, and Q116. The active-site Nucleophile is C50. G185–A190 is a binding site for NADP(+).

The protein belongs to the glutamyl-tRNA reductase family. Homodimer.

The enzyme catalyses (S)-4-amino-5-oxopentanoate + tRNA(Glu) + NADP(+) = L-glutamyl-tRNA(Glu) + NADPH + H(+). Its pathway is porphyrin-containing compound metabolism; protoporphyrin-IX biosynthesis; 5-aminolevulinate from L-glutamyl-tRNA(Glu): step 1/2. Functionally, catalyzes the NADPH-dependent reduction of glutamyl-tRNA(Glu) to glutamate 1-semialdehyde (GSA). This is Glutamyl-tRNA reductase from Legionella pneumophila (strain Paris).